Here is a 494-residue protein sequence, read N- to C-terminus: Glutamyl-tRNA(Gln) amidotransferase subunit A (494 aa).

Catalysis depends on charge relay system residues K72 and S147. S171 serves as the catalytic Acyl-ester intermediate.

Belongs to the amidase family. GatA subfamily. As to quaternary structure, heterotrimer of A, B and C subunits.

It carries out the reaction L-glutamyl-tRNA(Gln) + L-glutamine + ATP + H2O = L-glutaminyl-tRNA(Gln) + L-glutamate + ADP + phosphate + H(+). Its function is as follows. Allows the formation of correctly charged Gln-tRNA(Gln) through the transamidation of misacylated Glu-tRNA(Gln) in organisms which lack glutaminyl-tRNA synthetase. The reaction takes place in the presence of glutamine and ATP through an activated gamma-phospho-Glu-tRNA(Gln). This is Glutamyl-tRNA(Gln) amidotransferase subunit A from Methylacidiphilum infernorum (isolate V4) (Methylokorus infernorum (strain V4)).